The following is a 206-amino-acid chain: tRNA(Phe) 7-((3-amino-3-carboxypropyl)-4-demethylwyosine(37)-N(4))-methyltransferase 2 (206 aa).

Belongs to the TYW3 family.

The enzyme catalyses 4-demethyl-7-[(3S)-3-amino-3-carboxypropyl]wyosine(37) in tRNA(Phe) + S-adenosyl-L-methionine = 7-[(3S)-3-amino-3-carboxypropyl]wyosine(37) in tRNA(Phe) + S-adenosyl-L-homocysteine + H(+). Functionally, S-adenosyl-L-methionine-dependent methyltransferase that acts as a component of the wyosine derivatives biosynthesis pathway. Probably methylates N-4 position of wybutosine-86 to produce wybutosine-72. The protein is tRNA(Phe) 7-((3-amino-3-carboxypropyl)-4-demethylwyosine(37)-N(4))-methyltransferase 2 of Pyrococcus horikoshii (strain ATCC 700860 / DSM 12428 / JCM 9974 / NBRC 100139 / OT-3).